Consider the following 258-residue polypeptide: UPF0246 protein CJA_0191 (258 aa).

This sequence belongs to the UPF0246 family.

In Cellvibrio japonicus (strain Ueda107) (Pseudomonas fluorescens subsp. cellulosa), this protein is UPF0246 protein CJA_0191.